The sequence spans 440 residues: Aclacinomycin-T 2-deoxy-L-fucose transferase (440 aa).

The catalysed reaction is dTDP-2-deoxy-beta-L-fucose + aclacinomycin T = aclacinomycin S + dTDP + H(+). In terms of biological role, involved in the biosynthesis of the trisaccharide moiety characteristic of the antitumor drug aclacinomycins. In the first reaction, AknK catalyzes the transfer of 2-deoxy-beta-L-fucose from the activated donor dTDP-2-deoxy-beta-L-fucose to the mono-glycosylated aclacinomycin T (rhodosaminyl aklavinone), forming the di-glycosylated aclacinomycin S (L-2-deoxyfucosyl-L-rhodosaminyl aklavinone). It can also catalyze the addition of an alternate dTDP-L-sugar, dTDP-L-daunosamine, to aclacinomycin T and the addition of 2-deoxy-beta-L-fucose to the mono-glycosylated aglycones (monoglycosylated anthracyclines) such as daunomycin (daunorubicin), adriamycin (doxorubicin) and idarubicin. In vitro, AknK also catalyzes the addition of a second L-2-deoxyfucosyl moiety from dTDP-2-deoxy-beta-L-fucose, albeit with reduced activity, to the natural disaccharide chain of aclacinomycin S to produce L-deoxyfucosyl-L-deoxyfucosyl-L-rhodosaminyl aklavinone (2-deoxy-alpha-D-fucosyl-aclacinomycin S), a variant of the natural aclacinomycin A. The protein is Aclacinomycin-T 2-deoxy-L-fucose transferase of Streptomyces galilaeus.